We begin with the raw amino-acid sequence, 231 residues long: MKAMILAAGRGERMRPLTDTTPKPLLDVAGKPLIGWHLCRLKQAGFTEIVINHAWLGRQIEDALGDGSAYGVNIAYSPEPAGGLETAGGIAQALPLLGGQPFLVVNGDVLTDIDFTAAFQTASSLPEHISAHLWLVENPPHNPDGDFSLLPDSSVRPEVNGGNGLTFSGVGIYRPEMFDGIEAGSVAKLAPVLRGEMRQNRVSGQKHTGLWLDVGTVCRLKEAQALAGAWK.

Residues 11–13 (GER) and lysine 23 each bind UTP. Asparagine 106 is a binding site for substrate. Residue aspartate 108 participates in Mg(2+) binding. Substrate is bound by residues aspartate 146 and aspartate 213. Residue aspartate 213 participates in Mg(2+) binding.

This sequence belongs to the nucleotidyltransferase MurU family. As to quaternary structure, monomer. Mg(2+) serves as cofactor.

It carries out the reaction N-acetyl-alpha-D-muramate 1-phosphate + UDP + H(+) = UDP-N-acetyl-alpha-D-muramate + phosphate. The protein operates within cell wall biogenesis; peptidoglycan recycling. Functionally, catalyzes the formation of UDP-N-acetylmuramate (UDP-MurNAc), a crucial precursor of the bacterial peptidoglycan cell wall, from UTP and MurNAc-alpha-1P. Is likely involved in peptidoglycan recycling as part of a cell wall recycling pathway that bypasses de novo biosynthesis of the peptidoglycan precursor UDP-MurNAc. Is able to complement the fosfomycin sensitivity phenotype of a P.putida mutant lacking murU. The chain is N-acetylmuramate alpha-1-phosphate uridylyltransferase from Neisseria meningitidis serogroup B (strain ATCC BAA-335 / MC58).